A 531-amino-acid chain; its full sequence is Phosphomethylpyrimidine synthase (531 aa).

Substrate contacts are provided by residues Asn167, Met196, Tyr225, His261, 281-283 (SRG), 322-325 (DALR), and Glu361. His365 is a binding site for Zn(2+). A substrate-binding site is contributed by Tyr388. His429 contributes to the Zn(2+) binding site. [4Fe-4S] cluster contacts are provided by Cys511, Cys514, and Cys519.

This sequence belongs to the ThiC family. [4Fe-4S] cluster is required as a cofactor.

It carries out the reaction 5-amino-1-(5-phospho-beta-D-ribosyl)imidazole + S-adenosyl-L-methionine = 4-amino-2-methyl-5-(phosphooxymethyl)pyrimidine + CO + 5'-deoxyadenosine + formate + L-methionine + 3 H(+). Its pathway is cofactor biosynthesis; thiamine diphosphate biosynthesis. Catalyzes the synthesis of the hydroxymethylpyrimidine phosphate (HMP-P) moiety of thiamine from aminoimidazole ribotide (AIR) in a radical S-adenosyl-L-methionine (SAM)-dependent reaction. The polypeptide is Phosphomethylpyrimidine synthase (Chlorobium chlorochromatii (strain CaD3)).